Here is a 1218-residue protein sequence, read N- to C-terminus: NACHT, LRR and PYD domains-containing protein 1a allele 5 (1218 aa).

A compositionally biased stretch (polar residues) spans 1 to 29 (MGESQSKQESNTRVAQHGSQQDVDPTFQT). Disordered stretches follow at residues 1 to 44 (MGES…QVEQ) and 71 to 91 (EMDH…DRSE). Over residues 77 to 87 (RRHSHQSKKKL) the composition is skewed to basic residues. Residues 175–484 (QLVIIEGAAG…EFFAAMSYIL (310 aa)) enclose the NACHT domain. 181–188 (GAAGIGKS) contacts ATP. LRR repeat units follow at residues 343–364 (KERN…LTLC), 673–693 (NLEE…RSLC), and 730–750 (RLAE…RQLC). Over residues 799–815 (TMPTENTDGEESLTSSK) the composition is skewed to polar residues. The tract at residues 799 to 842 (TMPTENTDGEESLTSSKQQQQQSGDKHMEPLGTDDDFWGPSGPV) is disordered. Positions 835–968 (FWGPSGPVST…HFAVLENPSF (134 aa)) are ZU5. An FIIND domain is found at 835–1118 (FWGPSGPVST…LRPALPRMAS (284 aa)). A UPA region spans residues 969 to 1118 (SPMGVLLRMI…LRPALPRMAS (150 aa)). The CARD domain occupies 1122-1211 (DAPALLHFVD…HLIMDLLEKS (90 aa)).

It belongs to the NLRP family. As to quaternary structure, interacts (via LRR repeats) with BCL2 and BCL2L1 (via the loop between motifs BH4 and BH3). Interacts with NOD2; this interaction is enhanced in the presence of muramyl dipeptide (MDP) and increases IL1B release. Interacts with EIF2AK2/PKR; this interaction requires EIF2AK2 activity, is accompanied by EIF2AK2 autophosphorylation and promotes inflammasome assembly in response to danger-associated signals. Interacts with MEFV; this interaction targets Nlrp1a to degradation by autophagy, hence preventing excessive IL1B- and IL18-mediated inflammation. Interacts with DPP9; leading to inhibit activation of the inflammasome. DPP9 acts via formation of a ternary complex, composed of a DPP9 homodimer, one full-length NLRP1 protein, and one cleaved C-terminus of Nlrp1a (NACHT, LRR and PYD domains-containing protein 1a, C-terminus). Interacts with DPP8; leading to inhibit activation of the inflammasome, probably via formation of a ternary complex with DPP8. In terms of assembly, interacts with the C-terminal part of Nlrp1a (NACHT, LRR and PYD domains-containing protein 1a, C-terminus) in absence of pathogens and other damage-associated signals. Interacts with the N-terminal part of Nlrp1a (NACHT, LRR and PYD domains-containing protein 1a, N-terminus) in absence of pathogens and other damage-associated signals. Homomultimer; forms the Nlrp1a inflammasome polymeric complex, a filament composed of homopolymers of this form in response to pathogens and other damage-associated signals. The Nlrp1a inflammasome polymeric complex directly recruits pro-caspase-1 (proCASP1) independently of PYCARD/ASC. Interacts (via CARD domain) with CASP1 (via CARD domain); leading to CASP1 activation. Autocatalytically cleaved. Autocatalytic cleavage in FIIND region occurs constitutively, prior to activation signals, and is required for inflammasome activity (IL1B release), possibly by facilitating CASP1 binding. Both N- and C-terminal parts remain associated non-covalently. In terms of processing, ubiquitinated in response to pathogen-associated signals, leading to its degradation by the proteasome and subsequent release of the cleaved C-terminal part of the protein (NACHT, LRR and PYD domains-containing protein 1a, C-terminus), which polymerizes and forms the Nlrp1a inflammasome.

The protein resides in the cytoplasm. It localises to the cytosol. Its subcellular location is the nucleus. It is found in the inflammasome. Its activity is regulated as follows. Activated by pathogens and other damage-associated signals: activation promotes ubiquitination and degradation of the N-terminal part, releasing the cleaved C-terminal part of the protein (NACHT, LRR and PYD domains-containing protein 1a, C-terminus), which polymerizes and forms the Nlrp1a inflammasome. Nlrp1a inflammasome is inhibited by DPP8 and DPP9, which sequester the C-terminal fragment of Nlrp1a (NACHT, LRR and PYD domains-containing protein 1a, C-terminus) in a ternary complex, thereby preventing Nlrp1a oligomerization and activation. Nlrp1a inflammasome is strongly activated by Val-boroPro (Talabostat, PT-100), an inhibitor of dipeptidyl peptidases DPP8 and DPP9. Val-boroPro relieves inhibition of DPP8 and/or DPP9 by promoting disruption of the ternary complex, releasing its C-terminal part from autoinhibition. Not activated by cleavage by B.anthracis lethal toxin (LT) endopeptidase. Highly activated by Toxoplasma gondii. Functionally, acts as the sensor component of the Nlrp1a inflammasome, which mediates inflammasome activation in response to various pathogen-associated signals, leading to subsequent pyroptosis. Inflammasomes are supramolecular complexes that assemble in the cytosol in response to pathogens and other damage-associated signals and play critical roles in innate immunity and inflammation. Acts as a recognition receptor (PRR): recognizes specific pathogens and other damage-associated signals, such as Val-boroPro inhibitor, and mediates the formation of the inflammasome polymeric complex. In response to pathogen-associated signals, the N-terminal part of Nlrp1a is degraded by the proteasome, releasing the cleaved C-terminal part of the protein (NACHT, LRR and PYD domains-containing protein 1a, C-terminus), which polymerizes to initiate the formation of the inflammasome complex: the inflammasome directly recruits pro-caspase-1 (proCASP1) independently of PYCARD/ASC and promotes caspase-1 (CASP1) activation, which subsequently cleaves and activates inflammatory cytokines IL1B and IL18 and gasdermin-D (GSDMD), leading to pyroptosis. In the absence of GSDMD expression, the Nlrp1a inflammasome is able to recruit and activate CASP8, leading to activation of gasdermin-E (GSDME). In terms of biological role, constitutes the precursor of the Nlrp1a inflammasome, which mediates autoproteolytic processing within the FIIND domain to generate the N-terminal and C-terminal parts, which are associated non-covalently in absence of pathogens and other damage-associated signals. Regulatory part that prevents formation of the Nlrp1a inflammasome: in absence of pathogens and other damage-associated signals, interacts with the C-terminal part of Nlrp1a (NACHT, LRR and PYD domains-containing protein 1a, C-terminus), preventing activation of the Nlrp1a inflammasome. In response to pathogen-associated signals, this part is ubiquitinated by the N-end rule pathway and degraded by the proteasome, releasing the cleaved C-terminal part of the protein, which polymerizes and forms the Nlrp1a inflammasome. Its function is as follows. Constitutes the active part of the Nlrp1a inflammasome. In absence of pathogens and other damage-associated signals, interacts with the N-terminal part of Nlrp1a (NACHT, LRR and PYD domains-containing protein 1a, N-terminus), preventing activation of the Nlrp1a inflammasome. In response to pathogen-associated signals, the N-terminal part of Nlrp1a is degraded by the proteasome, releasing this form, which polymerizes to form the Nlrp1a inflammasome complex: the Nlrp1a inflammasome complex then directly recruits pro-caspase-1 (proCASP1) and promotes caspase-1 (CASP1) activation, leading to gasdermin-D (GSDMD) cleavage and subsequent pyroptosis. The protein is NACHT, LRR and PYD domains-containing protein 1a allele 5 of Rattus norvegicus (Rat).